The chain runs to 157 residues: Cyclic pyranopterin monophosphate synthase (157 aa).

Substrate is bound by residues 75–77 (LCH) and 111–112 (ME). The active site involves D126.

Belongs to the MoaC family. Homohexamer; trimer of dimers.

The enzyme catalyses (8S)-3',8-cyclo-7,8-dihydroguanosine 5'-triphosphate = cyclic pyranopterin phosphate + diphosphate. It participates in cofactor biosynthesis; molybdopterin biosynthesis. Functionally, catalyzes the conversion of (8S)-3',8-cyclo-7,8-dihydroguanosine 5'-triphosphate to cyclic pyranopterin monophosphate (cPMP). The polypeptide is Cyclic pyranopterin monophosphate synthase (Novosphingobium aromaticivorans (strain ATCC 700278 / DSM 12444 / CCUG 56034 / CIP 105152 / NBRC 16084 / F199)).